Reading from the N-terminus, the 280-residue chain is Putative pyruvate, phosphate dikinase regulatory protein (280 aa).

154–161 (GVSRTSKT) serves as a coordination point for ADP.

It belongs to the pyruvate, phosphate/water dikinase regulatory protein family. PDRP subfamily.

The enzyme catalyses N(tele)-phospho-L-histidyl/L-threonyl-[pyruvate, phosphate dikinase] + ADP = N(tele)-phospho-L-histidyl/O-phospho-L-threonyl-[pyruvate, phosphate dikinase] + AMP + H(+). It carries out the reaction N(tele)-phospho-L-histidyl/O-phospho-L-threonyl-[pyruvate, phosphate dikinase] + phosphate + H(+) = N(tele)-phospho-L-histidyl/L-threonyl-[pyruvate, phosphate dikinase] + diphosphate. In terms of biological role, bifunctional serine/threonine kinase and phosphorylase involved in the regulation of the pyruvate, phosphate dikinase (PPDK) by catalyzing its phosphorylation/dephosphorylation. This is Putative pyruvate, phosphate dikinase regulatory protein from Nitrobacter hamburgensis (strain DSM 10229 / NCIMB 13809 / X14).